A 105-amino-acid polypeptide reads, in one-letter code: Diuretic hormone class 2 (105 aa).

A signal peptide spans 1 to 23 (MTVLCTLMAFVMVVAISSLTVDA). Residues 24–63 (IPHSHESYWDQQDDIDRDEFLELLSRLSRTVMNRPEMENS) constitute a propeptide that is removed on maturation. Proline 96 is modified (proline amide). Residues 101–105 (RSEQA) constitute a propeptide that is removed on maturation.

In terms of tissue distribution, expressed in central brain, antennal lobes, retrocerebral complex and gnathal, thoracic and abdominal ganglia but not in optical lobes (at protein level).

The protein resides in the secreted. Functionally, regulation of fluid secretion. Stimulates Malpighian tubules fluid secretion. This is Diuretic hormone class 2 from Camponotus floridanus (Florida carpenter ant).